The chain runs to 573 residues: Ribosomal RNA-processing protein 9 (573 aa).

Residues 1–63 (MSDVTQQKKR…FEGENPADKR (63 aa)) form a disordered region. Ser-2 is subject to N-acetylserine. Residues 25-58 (DEEITDPSSNEDEQLEVSDEEDALESEEEFEGEN) show a composition bias toward acidic residues. Residues 32-106 (SSNEDEQLEV…KERTIDEYNN (75 aa)) adopt a coiled-coil conformation. Ser-50 is subject to Phosphoserine. 6 WD repeats span residues 234 to 273 (GHYDEILTVAASPDGKYVVTGGRDRKLIVWSTESLSPVKV), 278 to 317 (DRRGEVLSLAFRKNSDQLYASCADFKIRTYSINQFSQLEI), 320 to 359 (GHHDIVEDISALAMERCVTVGARDRTAMLWKIPDETRLTF), 397 to 435 (FCEGSIDVVSMVDDFHFITGSDNGNICLWSLAKKKPIFT), 471 to 509 (QPFWITSLYAIPYSNVFISGSWSGSLKVWKISDNLRSFE), and 516 to 562 (GAKG…ARNG).

Belongs to the WD repeat RRP9 family. Interacts with UTP25. Component of the ribosomal small subunit (SSU) processome composed of at least 40 protein subunits and snoRNA U3.

It localises to the nucleus. The protein localises to the nucleolus. In terms of biological role, involved in nucleolar processing of pre-18S ribosomal RNA. Required for efficient pre-rRNA cleavage at sites A0, A1 and A2, and biosynthesis of 18S rRNA. The sequence is that of Ribosomal RNA-processing protein 9 (RRP9) from Saccharomyces cerevisiae (strain ATCC 204508 / S288c) (Baker's yeast).